The following is a 188-amino-acid chain: UPF0340 protein GK3370 (188 aa).

The protein belongs to the UPF0340 family.

In Geobacillus kaustophilus (strain HTA426), this protein is UPF0340 protein GK3370.